Here is a 231-residue protein sequence, read N- to C-terminus: tRNA (guanine-N(1)-)-methyltransferase (231 aa).

Gly112 contacts S-adenosyl-L-methionine.

This sequence belongs to the RNA methyltransferase TrmD family. In terms of assembly, homodimer.

It is found in the cytoplasm. It catalyses the reaction guanosine(37) in tRNA + S-adenosyl-L-methionine = N(1)-methylguanosine(37) in tRNA + S-adenosyl-L-homocysteine + H(+). Functionally, specifically methylates guanosine-37 in various tRNAs. The protein is tRNA (guanine-N(1)-)-methyltransferase of Chlorobium chlorochromatii (strain CaD3).